A 498-amino-acid polypeptide reads, in one-letter code: ATP synthase subunit beta, chloroplastic (498 aa).

Residue 172–179 (GGAGVGKT) participates in ATP binding.

It belongs to the ATPase alpha/beta chains family. As to quaternary structure, F-type ATPases have 2 components, CF(1) - the catalytic core - and CF(0) - the membrane proton channel. CF(1) has five subunits: alpha(3), beta(3), gamma(1), delta(1), epsilon(1). CF(0) has four main subunits: a(1), b(1), b'(1) and c(9-12).

It localises to the plastid. The protein localises to the chloroplast thylakoid membrane. The catalysed reaction is ATP + H2O + 4 H(+)(in) = ADP + phosphate + 5 H(+)(out). In terms of biological role, produces ATP from ADP in the presence of a proton gradient across the membrane. The catalytic sites are hosted primarily by the beta subunits. The chain is ATP synthase subunit beta, chloroplastic from Buxus microphylla (Littleleaf boxwood).